The chain runs to 489 residues: MTEHLDVVIVGAGISGVSAAWHLQDRCPTKSYAILEKRESMGGTWDLFRYPGIRSDSDMYTLGFRFRPWTGRQAIADGKPILEYVKSTAAMYGIDRHIRFHHKVISADWSTAENRWTVHIQSHGTLSALTCEFLFLCSGYYNYDEGYSPRFAGSEDFVGPIIHPQHWPEDLDYDAKNIVVIGSGATAVTLVPALADSGAKHVTMLQRSPTYIVSQPDRDGIAEKLNRWLPETMAYTAVRWKNVLRQAAVYSACQKWPRRMRKMFLSLIQRQLPEGYDVRKHFGPHYNPWDQRLCLVPNGDLFRAIRHGKVEVVTDTIERFTATGIRLNSGRELPADIIITATGLNLQLFGGATATIDGQQVDITTTMAYKGMMLSGIPNMAYTVGYTNASWTLKADLVSEFVCRLLNYMDDNGFDTVVVERPGSDVEERPFMEFTPGYVLRSLDELPKQGSRTPWRLNQNYLRDIRLIRRGKIDDEGLRFAKRPAPVGV.

FAD-binding positions include S15, E36, 44–47 (TWDL), D56, and V104. 54–56 (RSD) is an NADP(+) binding site. Residues 183-189 (SGATAVT) and 207-208 (RS) contribute to the NADP(+) site.

This sequence belongs to the FAD-binding monooxygenase family. The cofactor is FAD.

It localises to the cell membrane. The enzyme catalyses ethionamide + NADPH + O2 + H(+) = ethionamide S-oxide + NADP(+) + H2O. In terms of biological role, monooxygenase able to convert a wide range of ketones to the corresponding esters or lactones via a Baeyer-Villiger oxidation reaction. Can act on long-chain aliphatic ketones (2-hexanone to 2-dodecanone) and on aromatic ketones (phenylacetone and benzylacetone). Is also able to catalyze enantioselective sulfoxidation of methyl-p-tolylsulfide. In vivo, likely functions as a BVMO, but the exact nature of the physiological substrate(s) remains to be established. Functionally, is responsible for the activation of several thiocarbamide-containing pro-drugs, such as ethionamide (ETH), isoxyl (ISO) and thiacetazone (TAC), into reactive species. The protein is FAD-containing monooxygenase EthA (ethA) of Mycobacterium bovis (strain ATCC BAA-935 / AF2122/97).